Consider the following 356-residue polypeptide: Isocitrate dehydrogenase [NAD] subunit 1, mitochondrial (356 aa).

Residues Arg-106, Arg-137, and Asp-224 each contribute to the substrate site. Asp-224 contributes to the Mg(2+) binding site.

Belongs to the isocitrate and isopropylmalate dehydrogenases family. Octamer of two non-identical subunits IDH1 and IDH2. Mg(2+) serves as cofactor. Requires Mn(2+) as cofactor.

The protein localises to the mitochondrion. It catalyses the reaction D-threo-isocitrate + NAD(+) = 2-oxoglutarate + CO2 + NADH. Functionally, performs an essential role in the oxidative function of the citric acid cycle. Also binds RNA; specifically to the 5'-untranslated leaders of mitochondrial mRNAs. This is Isocitrate dehydrogenase [NAD] subunit 1, mitochondrial (idh1) from Schizosaccharomyces pombe (strain 972 / ATCC 24843) (Fission yeast).